Here is a 73-residue protein sequence, read N- to C-terminus: Sec-independent protein translocase protein TatA (73 aa).

A helical membrane pass occupies residues 1–21; that stretch reads MGLSWQQLLILLLVVVVIFGT.

Belongs to the TatA/E family. The Tat system comprises two distinct complexes: a TatABC complex, containing multiple copies of TatA, TatB and TatC subunits, and a separate TatA complex, containing only TatA subunits. Substrates initially bind to the TatABC complex, which probably triggers association of the separate TatA complex to form the active translocon.

The protein localises to the cell inner membrane. In terms of biological role, part of the twin-arginine translocation (Tat) system that transports large folded proteins containing a characteristic twin-arginine motif in their signal peptide across membranes. TatA could form the protein-conducting channel of the Tat system. This is Sec-independent protein translocase protein TatA from Histophilus somni (strain 129Pt) (Haemophilus somnus).